The primary structure comprises 293 residues: Ribosomal protein L11 methyltransferase (293 aa).

Threonine 145, glycine 166, aspartate 188, and asparagine 230 together coordinate S-adenosyl-L-methionine.

The protein belongs to the methyltransferase superfamily. PrmA family.

It is found in the cytoplasm. It catalyses the reaction L-lysyl-[protein] + 3 S-adenosyl-L-methionine = N(6),N(6),N(6)-trimethyl-L-lysyl-[protein] + 3 S-adenosyl-L-homocysteine + 3 H(+). In terms of biological role, methylates ribosomal protein L11. The protein is Ribosomal protein L11 methyltransferase of Shewanella frigidimarina (strain NCIMB 400).